Reading from the N-terminus, the 345-residue chain is 3-isopropylmalate dehydrogenase (345 aa).

Substrate is bound by residues Arg94, Arg104, Arg130, and Asp215. Asp215, Asp239, and Asp243 together coordinate Mg(2+). Residue 273 to 285 (GSAPDIAGKGIAN) coordinates NAD(+).

Belongs to the isocitrate and isopropylmalate dehydrogenases family. LeuB type 1 subfamily. Homodimer. Mg(2+) serves as cofactor. Requires Mn(2+) as cofactor.

It localises to the cytoplasm. The catalysed reaction is (2R,3S)-3-isopropylmalate + NAD(+) = 4-methyl-2-oxopentanoate + CO2 + NADH. It participates in amino-acid biosynthesis; L-leucine biosynthesis; L-leucine from 3-methyl-2-oxobutanoate: step 3/4. Its function is as follows. Catalyzes the oxidation of 3-carboxy-2-hydroxy-4-methylpentanoate (3-isopropylmalate) to 3-carboxy-4-methyl-2-oxopentanoate. The product decarboxylates to 4-methyl-2 oxopentanoate. This Lactococcus lactis subsp. lactis (strain IL1403) (Streptococcus lactis) protein is 3-isopropylmalate dehydrogenase (leuB).